A 339-amino-acid chain; its full sequence is Endospore coat-associated protein YutH (339 aa).

It belongs to the CotS family.

It is found in the forespore outer membrane. The protein resides in the spore coat. Involved in sporulation. The sequence is that of Endospore coat-associated protein YutH (yutH) from Bacillus subtilis (strain 168).